Consider the following 258-residue polypeptide: Acyl-[acyl-carrier-protein]--UDP-N-acetylglucosamine O-acyltransferase (258 aa).

This sequence belongs to the transferase hexapeptide repeat family. LpxA subfamily. Homotrimer.

It localises to the cytoplasm. The enzyme catalyses a (3R)-hydroxyacyl-[ACP] + UDP-N-acetyl-alpha-D-glucosamine = a UDP-3-O-[(3R)-3-hydroxyacyl]-N-acetyl-alpha-D-glucosamine + holo-[ACP]. The protein operates within glycolipid biosynthesis; lipid IV(A) biosynthesis; lipid IV(A) from (3R)-3-hydroxytetradecanoyl-[acyl-carrier-protein] and UDP-N-acetyl-alpha-D-glucosamine: step 1/6. Involved in the biosynthesis of lipid A, a phosphorylated glycolipid that anchors the lipopolysaccharide to the outer membrane of the cell. The polypeptide is Acyl-[acyl-carrier-protein]--UDP-N-acetylglucosamine O-acyltransferase (Alkalilimnicola ehrlichii (strain ATCC BAA-1101 / DSM 17681 / MLHE-1)).